The chain runs to 189 residues: Rho-related protein racM (189 aa).

GTP is bound at residue glycine 12–threonine 19. An Effector region motif is present at residues tyrosine 35–phenylalanine 43. GTP-binding positions include aspartate 60–glycine 64 and threonine 118–aspartate 121. At cysteine 186 the chain carries Cysteine methyl ester. Cysteine 186 carries the S-geranylgeranyl cysteine lipid modification. A propeptide spans isoleucine 187–leucine 189 (removed in mature form).

This sequence belongs to the small GTPase superfamily. Rho family.

It localises to the cell membrane. The protein is Rho-related protein racM (racM) of Dictyostelium discoideum (Social amoeba).